Consider the following 368-residue polypeptide: tRNA(Met) cytidine acetate ligase (368 aa).

ATP is bound by residues 7–20 (IAEF…HKYL), glycine 96, asparagine 152, and arginine 175.

The protein belongs to the TmcAL family.

Its subcellular location is the cytoplasm. The catalysed reaction is cytidine(34) in elongator tRNA(Met) + acetate + ATP = N(4)-acetylcytidine(34) in elongator tRNA(Met) + AMP + diphosphate. Catalyzes the formation of N(4)-acetylcytidine (ac(4)C) at the wobble position of elongator tRNA(Met), using acetate and ATP as substrates. First activates an acetate ion to form acetyladenylate (Ac-AMP) and then transfers the acetyl group to tRNA to form ac(4)C34. This chain is tRNA(Met) cytidine acetate ligase, found in Streptococcus pyogenes serotype M1.